We begin with the raw amino-acid sequence, 456 residues long: Bifunctional protein GlmU (456 aa).

Residues 1-229 form a pyrophosphorylase region; the sequence is MLNSAMSVVI…ISETDGVNNR (229 aa). UDP-N-acetyl-alpha-D-glucosamine is bound by residues 11–14, Lys-25, Gln-76, 81–82, 103–105, Gly-140, Glu-154, Asn-169, and Asn-227; these read LAAG, GT, and YGD. Mg(2+) is bound at residue Asp-105. Residue Asn-227 coordinates Mg(2+). The segment at 230–250 is linker; it reads LQLSRLERIYQAEQAEKLLLS. The tract at residues 251–456 is N-acetyltransferase; the sequence is GVMLRDPARF…QGWQRPVKKK (206 aa). 2 residues coordinate UDP-N-acetyl-alpha-D-glucosamine: Arg-333 and Lys-351. Catalysis depends on His-363, which acts as the Proton acceptor. Residues Tyr-366 and Asn-377 each contribute to the UDP-N-acetyl-alpha-D-glucosamine site. Residues Ala-380, 386–387, Ser-405, Ala-423, and Arg-440 each bind acetyl-CoA; that span reads NY.

In the N-terminal section; belongs to the N-acetylglucosamine-1-phosphate uridyltransferase family. This sequence in the C-terminal section; belongs to the transferase hexapeptide repeat family. In terms of assembly, homotrimer. Mg(2+) serves as cofactor.

It is found in the cytoplasm. The catalysed reaction is alpha-D-glucosamine 1-phosphate + acetyl-CoA = N-acetyl-alpha-D-glucosamine 1-phosphate + CoA + H(+). It carries out the reaction N-acetyl-alpha-D-glucosamine 1-phosphate + UTP + H(+) = UDP-N-acetyl-alpha-D-glucosamine + diphosphate. Its pathway is nucleotide-sugar biosynthesis; UDP-N-acetyl-alpha-D-glucosamine biosynthesis; N-acetyl-alpha-D-glucosamine 1-phosphate from alpha-D-glucosamine 6-phosphate (route II): step 2/2. The protein operates within nucleotide-sugar biosynthesis; UDP-N-acetyl-alpha-D-glucosamine biosynthesis; UDP-N-acetyl-alpha-D-glucosamine from N-acetyl-alpha-D-glucosamine 1-phosphate: step 1/1. It participates in bacterial outer membrane biogenesis; LPS lipid A biosynthesis. Its function is as follows. Catalyzes the last two sequential reactions in the de novo biosynthetic pathway for UDP-N-acetylglucosamine (UDP-GlcNAc). The C-terminal domain catalyzes the transfer of acetyl group from acetyl coenzyme A to glucosamine-1-phosphate (GlcN-1-P) to produce N-acetylglucosamine-1-phosphate (GlcNAc-1-P), which is converted into UDP-GlcNAc by the transfer of uridine 5-monophosphate (from uridine 5-triphosphate), a reaction catalyzed by the N-terminal domain. The polypeptide is Bifunctional protein GlmU (Salmonella paratyphi A (strain ATCC 9150 / SARB42)).